We begin with the raw amino-acid sequence, 189 residues long: UPF0312 protein VPA0850 (189 aa).

Residues 1–22 form the signal peptide; it reads MKKSLFATGLAIAMALPLGAQA.

Belongs to the UPF0312 family. Type 1 subfamily.

It localises to the periplasm. In Vibrio parahaemolyticus serotype O3:K6 (strain RIMD 2210633), this protein is UPF0312 protein VPA0850.